Consider the following 557-residue polypeptide: Formate--tetrahydrofolate ligase (557 aa).

65–72 serves as a coordination point for ATP; that stretch reads SPAGEGKT.

This sequence belongs to the formate--tetrahydrofolate ligase family.

The catalysed reaction is (6S)-5,6,7,8-tetrahydrofolate + formate + ATP = (6R)-10-formyltetrahydrofolate + ADP + phosphate. Its pathway is one-carbon metabolism; tetrahydrofolate interconversion. This Methylobacillus flagellatus (strain ATCC 51484 / DSM 6875 / VKM B-1610 / KT) protein is Formate--tetrahydrofolate ligase.